A 267-amino-acid polypeptide reads, in one-letter code: NAD kinase (267 aa).

Asp-45 acts as the Proton acceptor in catalysis. NAD(+) contacts are provided by residues 45 to 46, 121 to 122, Lys-147, Asp-149, 160 to 165, and Ala-184; these read DG, NE, and TAYSKS.

Belongs to the NAD kinase family. The cofactor is a divalent metal cation.

The protein resides in the cytoplasm. The enzyme catalyses NAD(+) + ATP = ADP + NADP(+) + H(+). In terms of biological role, involved in the regulation of the intracellular balance of NAD and NADP, and is a key enzyme in the biosynthesis of NADP. Catalyzes specifically the phosphorylation on 2'-hydroxyl of the adenosine moiety of NAD to yield NADP. This is NAD kinase from Lactobacillus gasseri (strain ATCC 33323 / DSM 20243 / BCRC 14619 / CIP 102991 / JCM 1131 / KCTC 3163 / NCIMB 11718 / NCTC 13722 / AM63).